The primary structure comprises 416 residues: PTS system N-acetylglucosamine-specific EIIC component (416 aa).

In terms of domain architecture, PTS EIIC type-1 spans Ser16–Pro406. A run of 10 helical transmembrane segments spans residues Ala68–Phe88, Thr96–Val116, Thr130–Trp150, Leu170–Trp190, Gly196–Gly216, Ile266–Met286, Val298–Ile318, Met323–Ile343, Thr344–Leu364, and Ile375–Val395.

The protein localises to the cell membrane. In terms of biological role, the phosphoenolpyruvate-dependent sugar phosphotransferase system (sugar PTS), a major carbohydrate active transport system, catalyzes the phosphorylation of incoming sugar substrates concomitantly with their translocation across the cell membrane. This system is involved in N-acetylglucosamine (GlcNAc) transport. High-affinity permease, which exhibits a narrow specificity for GlcNAc. Essential for C-signaling between vegetative growth and development. In Streptomyces coelicolor (strain ATCC BAA-471 / A3(2) / M145), this protein is PTS system N-acetylglucosamine-specific EIIC component.